Reading from the N-terminus, the 374-residue chain is Quinolinate synthase (374 aa).

Residues His53 and Ser70 each contribute to the iminosuccinate site. [4Fe-4S] cluster is bound at residue Cys116. Residues 148–150 (YMN) and Ser169 each bind iminosuccinate. [4Fe-4S] cluster is bound at residue Cys236. Residues 262–264 (HPE) and Thr279 each bind iminosuccinate. Cys327 contacts [4Fe-4S] cluster.

Belongs to the quinolinate synthase family. Type 3 subfamily. It depends on [4Fe-4S] cluster as a cofactor.

Its subcellular location is the cytoplasm. It carries out the reaction iminosuccinate + dihydroxyacetone phosphate = quinolinate + phosphate + 2 H2O + H(+). Its pathway is cofactor biosynthesis; NAD(+) biosynthesis; quinolinate from iminoaspartate: step 1/1. Catalyzes the condensation of iminoaspartate with dihydroxyacetone phosphate to form quinolinate. This chain is Quinolinate synthase, found in Halobacterium salinarum (strain ATCC 29341 / DSM 671 / R1).